The following is a 524-amino-acid chain: uncharacterized protein (524 aa).

The first 26 residues, 1 to 26 (MLKIDMWFKLKSLGFSLISLQALLAS), serve as a signal peptide directing secretion. Residue Cys27 is the site of N-palmitoyl cysteine attachment. Cys27 carries the S-diacylglycerol cysteine lipid modification. The interval 37 to 68 (IEEKNDSTTDNNATPFKDEQSDQGTEVNQQPK) is disordered. The span at 58 to 68 (DQGTEVNQQPK) shows a compositional bias: polar residues.

This sequence belongs to the MG067/MG068/MG395 family.

Its subcellular location is the cell membrane. This is an uncharacterized protein from Mycoplasma genitalium (strain ATCC 33530 / DSM 19775 / NCTC 10195 / G37) (Mycoplasmoides genitalium).